A 358-amino-acid polypeptide reads, in one-letter code: MTEFFSGNRGEWSEPYALFKLLADGQLYLGDSQLNKLGIVMPILSILRQEKNYESSYILHNNSQNIIVTYNNEKFTVPISGFQEKAVLLLSEIKNASGNRAFSIPSIDDFLKKLGFTHLSASSSSKSDIHIVVHDLRTGITPTLGFSIKSQLGSPATLLNASKATNFTFKIYNLKDKQIEYINSLSGIKEKIKEIFSQDGKLEFVKVESCKFSNNLTLIDTKLPEILAEMILLYYSSKLNKIDDVTEHISRLNPLNYNLSCNHNYYEYKVKHFLNDVALGMRPDDVWLGQYDATGGYLVVKEDGELLCYHIYSKNSFEDYLYCNTKFDTPSSSRHDFGHIYQVNHDFFIKLNVQIRFL.

In terms of assembly, homodimer.

It catalyses the reaction Endonucleolytic cleavage of DNA to give specific double-stranded fragments with terminal 5'-phosphates.. In terms of biological role, an E and P subtype restriction enzyme that recognizes the double-stranded sequence 5'-CCGG-3' and cleaves after C-1. The protein is Type II restriction enzyme HpaII of Haemophilus parainfluenzae.